A 305-amino-acid chain; its full sequence is UPF0450 protein C17orf58 homolog (305 aa).

The signal sequence occupies residues 1–22 (MTARALWLLCLIVGWSPEAPVA). Positions 18 to 160 (EAPVAERKAP…DREPETQSCA (143 aa)) are disordered. The span at 21-39 (VAERKAPPPHRKPDSRETP) shows a compositional bias: basic and acidic residues. 3 disulfide bridges follow: C159–C233, C163–C237, and C174–C304. Residues 159-304 (CARACSADAD…QVRGATHTQC (146 aa)) form the NTR domain.

It belongs to the UPF0450 family.

The polypeptide is UPF0450 protein C17orf58 homolog (Mus musculus (Mouse)).